A 433-amino-acid polypeptide reads, in one-letter code: Pyrimidine-nucleoside phosphorylase (433 aa).

81-83 (KHS) lines the phosphate pocket. K(+) contacts are provided by glycine 88 and threonine 90. Residues threonine 92, 108 to 110 (KMS), and threonine 120 contribute to the phosphate site. The substrate site is built by arginine 168 and lysine 187. Residues leucine 243, alanine 246, and glutamate 255 each contribute to the K(+) site.

It belongs to the thymidine/pyrimidine-nucleoside phosphorylase family. In terms of assembly, homodimer. K(+) is required as a cofactor.

It carries out the reaction uridine + phosphate = alpha-D-ribose 1-phosphate + uracil. The catalysed reaction is thymidine + phosphate = 2-deoxy-alpha-D-ribose 1-phosphate + thymine. It catalyses the reaction 2'-deoxyuridine + phosphate = 2-deoxy-alpha-D-ribose 1-phosphate + uracil. In terms of biological role, catalyzes phosphorolysis of the pyrimidine nucleosides uridine, thymidine and 2'-deoxyuridine with the formation of the corresponding pyrimidine base and ribose-1-phosphate. This Staphylococcus haemolyticus (strain JCSC1435) protein is Pyrimidine-nucleoside phosphorylase (pdp).